The following is a 257-amino-acid chain: MLPSDLVKYKEQSQKIIALTAWDSISGSIAEQANVDLVLVGDSLAMVCLGYKSTLPLTLENIIYHTNAVSRGFKKKIEEQPLLVTDMPFLTYQCGEDKAVEYAGKIIQSTYAKAVKVEGAEPEIQKVISRLIRMGIPVMGHIGLTPQSYLNLGLKKQGESLESQEKIKKDASILEKLGCFSIVLEHMPELLAKEIQNNLTIPTIGIGAGNFCDGQVRVTADLLGLNDDQPPFCQPIIQGKHLFKDKLKEWVDSERLN.

Residues Asp-42 and Asp-86 each coordinate Mg(2+). Residues 42–43, Asp-86, and Lys-116 each bind 3-methyl-2-oxobutanoate; that span reads DS. Glu-118 contributes to the Mg(2+) binding site. The active-site Proton acceptor is Glu-185.

The protein belongs to the PanB family. Homodecamer; pentamer of dimers. Requires Mg(2+) as cofactor.

Its subcellular location is the cytoplasm. It carries out the reaction 3-methyl-2-oxobutanoate + (6R)-5,10-methylene-5,6,7,8-tetrahydrofolate + H2O = 2-dehydropantoate + (6S)-5,6,7,8-tetrahydrofolate. It participates in cofactor biosynthesis; (R)-pantothenate biosynthesis; (R)-pantoate from 3-methyl-2-oxobutanoate: step 1/2. Functionally, catalyzes the reversible reaction in which hydroxymethyl group from 5,10-methylenetetrahydrofolate is transferred onto alpha-ketoisovalerate to form ketopantoate. This Prochlorococcus marinus (strain MIT 9312) protein is 3-methyl-2-oxobutanoate hydroxymethyltransferase.